A 408-amino-acid polypeptide reads, in one-letter code: S-adenosylmethionine synthase (408 aa).

H19 contributes to the ATP binding site. D21 contributes to the Mg(2+) binding site. E47 lines the K(+) pocket. Positions 60 and 104 each coordinate L-methionine. Positions 104–114 are flexible loop; sequence QSPEIASGVDH. ATP is bound by residues 185–187, 255–256, D264, 270–271, A287, and K291; these read DAK, RF, and RK. D264 is an L-methionine binding site. K295 provides a ligand contact to L-methionine.

It belongs to the AdoMet synthase family. In terms of assembly, homotetramer; dimer of dimers. Requires Mg(2+) as cofactor. K(+) serves as cofactor.

The protein resides in the cytoplasm. It catalyses the reaction L-methionine + ATP + H2O = S-adenosyl-L-methionine + phosphate + diphosphate. It functions in the pathway amino-acid biosynthesis; S-adenosyl-L-methionine biosynthesis; S-adenosyl-L-methionine from L-methionine: step 1/1. Catalyzes the formation of S-adenosylmethionine (AdoMet) from methionine and ATP. The overall synthetic reaction is composed of two sequential steps, AdoMet formation and the subsequent tripolyphosphate hydrolysis which occurs prior to release of AdoMet from the enzyme. This chain is S-adenosylmethionine synthase, found in Deinococcus radiodurans (strain ATCC 13939 / DSM 20539 / JCM 16871 / CCUG 27074 / LMG 4051 / NBRC 15346 / NCIMB 9279 / VKM B-1422 / R1).